The chain runs to 372 residues: Glutamate 5-kinase (372 aa).

Residue Lys14 coordinates ATP. Ser54, Asp141, and Asn153 together coordinate substrate. ATP is bound at residue 173–174; it reads TD. The PUA domain occupies 280 to 358; that stretch reads AGRIVLDQGA…TDILSILGFV (79 aa).

The protein belongs to the glutamate 5-kinase family.

The protein localises to the cytoplasm. It catalyses the reaction L-glutamate + ATP = L-glutamyl 5-phosphate + ADP. The protein operates within amino-acid biosynthesis; L-proline biosynthesis; L-glutamate 5-semialdehyde from L-glutamate: step 1/2. Catalyzes the transfer of a phosphate group to glutamate to form L-glutamate 5-phosphate. The sequence is that of Glutamate 5-kinase from Herminiimonas arsenicoxydans.